Here is a 148-residue protein sequence, read N- to C-terminus: Large ribosomal subunit protein bL9 (148 aa).

It belongs to the bacterial ribosomal protein bL9 family.

Functionally, binds to the 23S rRNA. The chain is Large ribosomal subunit protein bL9 from Bifidobacterium longum (strain DJO10A).